A 260-amino-acid chain; its full sequence is 5-oxoprolinase subunit A (260 aa).

It belongs to the LamB/PxpA family. Forms a complex composed of PxpA, PxpB and PxpC.

The enzyme catalyses 5-oxo-L-proline + ATP + 2 H2O = L-glutamate + ADP + phosphate + H(+). Catalyzes the cleavage of 5-oxoproline to form L-glutamate coupled to the hydrolysis of ATP to ADP and inorganic phosphate. The sequence is that of 5-oxoprolinase subunit A from Methylococcus capsulatus (strain ATCC 33009 / NCIMB 11132 / Bath).